Reading from the N-terminus, the 200-residue chain is NAD(P)H dehydrogenase (quinone) (200 aa).

In terms of domain architecture, Flavodoxin-like spans 4–191; sequence VLVLYYSSYG…DIARYQGKHV (188 aa). Residues 10 to 15 and 79 to 81 contribute to the FMN site; these read SSYGHV and TRF. Tyr12 contacts NAD(+). Trp99 serves as a coordination point for substrate. FMN contacts are provided by residues 114 to 120 and His135; that span reads STGTQHG.

It belongs to the WrbA family. It depends on FMN as a cofactor.

The enzyme catalyses a quinone + NADH + H(+) = a quinol + NAD(+). It catalyses the reaction a quinone + NADPH + H(+) = a quinol + NADP(+). This chain is NAD(P)H dehydrogenase (quinone), found in Burkholderia ambifaria (strain MC40-6).